Reading from the N-terminus, the 241-residue chain is Large ribosomal subunit protein uL30 (241 aa).

The segment at 1-25 is disordered; sequence MASTLKPETLVKKSKAQQKTAEERA.

The protein belongs to the universal ribosomal protein uL30 family.

The protein is Large ribosomal subunit protein uL30 (RPL7) of Debaryomyces hansenii (strain ATCC 36239 / CBS 767 / BCRC 21394 / JCM 1990 / NBRC 0083 / IGC 2968) (Yeast).